The primary structure comprises 547 residues: Chaperonin GroEL (547 aa).

ATP-binding positions include 30–33, Lys51, 87–91, Gly415, and Asp496; these read TLGP and DGTTT.

This sequence belongs to the chaperonin (HSP60) family. As to quaternary structure, forms a cylinder of 14 subunits composed of two heptameric rings stacked back-to-back. Interacts with the co-chaperonin GroES.

It is found in the cytoplasm. It carries out the reaction ATP + H2O + a folded polypeptide = ADP + phosphate + an unfolded polypeptide.. Its function is as follows. Together with its co-chaperonin GroES, plays an essential role in assisting protein folding. The GroEL-GroES system forms a nano-cage that allows encapsulation of the non-native substrate proteins and provides a physical environment optimized to promote and accelerate protein folding. This Actinobacillus pleuropneumoniae serotype 5b (strain L20) protein is Chaperonin GroEL.